The sequence spans 794 residues: Cilia- and flagella-associated protein 184 (794 aa).

2 disordered regions span residues 1–105 (MASE…VNSE) and 386–458 (AHEE…QQDT). The span at 24–35 (QMQQYMMEMQRQ) shows a compositional bias: low complexity. Acidic residues predominate over residues 49 to 69 (EGYEEGQEGEGYGEEYGDQDY). 3 stretches are compositionally biased toward basic and acidic residues: residues 89-103 (QVNE…RRVN), 386-411 (AHEE…KDYG), and 431-445 (ISDK…HAEQ). The span at 446-456 (EQNQQAAQQQQ) shows a compositional bias: low complexity. 2 coiled-coil regions span residues 461 to 613 (NKEI…LRLR) and 638 to 775 (FEQL…ANQI). Residues 774–787 (QISTQNMQSQNNSL) show a composition bias toward polar residues. Residues 774–794 (QISTQNMQSQNNSLKKPYQPY) form a disordered region.

The protein belongs to the CFAP184 family. In terms of assembly, forms a complex with CFAP263; the interaction is required for functional activity in cilia.

Its subcellular location is the cell projection. The protein localises to the cilium. Functionally, in complex with CFAP263, acts as a regulator of ciliary beating that connects radial spoke 3 (RS3) to the inner dynein arm (IDA) and the nexin-dynein regulatory complex (N-DRC). The complex is positioned parallel to N-DRC and forms a connection between the arch at the base of RS3, the IDA tail and N-DRC. The protein is Cilia- and flagella-associated protein 184 (CFAP184) of Tetrahymena thermophila (strain SB210).